Here is a 162-residue protein sequence, read N- to C-terminus: NADH-quinone oxidoreductase subunit I (162 aa).

4Fe-4S ferredoxin-type domains are found at residues 52 to 82 and 93 to 122; these read LRRYPNGEERCIACKLCEAICPAQAITIEAG and TRYDIDMVKCIYCGMCQEACPVDAIVEGPN. Residues Cys-62, Cys-65, Cys-68, Cys-72, Cys-102, Cys-105, Cys-108, and Cys-112 each contribute to the [4Fe-4S] cluster site.

The protein belongs to the complex I 23 kDa subunit family. As to quaternary structure, NDH-1 is composed of 14 different subunits. Subunits NuoA, H, J, K, L, M, N constitute the membrane sector of the complex. The cofactor is [4Fe-4S] cluster.

Its subcellular location is the cell inner membrane. The enzyme catalyses a quinone + NADH + 5 H(+)(in) = a quinol + NAD(+) + 4 H(+)(out). NDH-1 shuttles electrons from NADH, via FMN and iron-sulfur (Fe-S) centers, to quinones in the respiratory chain. The immediate electron acceptor for the enzyme in this species is believed to be ubiquinone. Couples the redox reaction to proton translocation (for every two electrons transferred, four hydrogen ions are translocated across the cytoplasmic membrane), and thus conserves the redox energy in a proton gradient. The polypeptide is NADH-quinone oxidoreductase subunit I (Methylorubrum extorquens (strain PA1) (Methylobacterium extorquens)).